A 500-amino-acid chain; its full sequence is MDVFKQSEVWFVIGSQNLYGPKTLQQVMDNAHQVVNSLNSEAGLPVKLVLKPLVTTPDEITALCREANYDTACIGIMTWLHTFSPAKMWIGGLSILNKPLLQFHTQFNAQIPWETMDMDFMNLNQTAHGGREFGFIGARMRQQHSVITGHWQDKEAHQRIGQWMRVAAAKQESQQLKVARFGDNMREVAVTEGDKVAAQIQFGYSVNAYGIGDLVAVVDAVSKGDIDTLVEEYEATYRFTDAVKLNGDKRENLLDAARIELGMTRFLEQGGFKAFTTNFENLYGLKQLPGLAVQRLMQQGYGFGGEGDWKTAALLRILKVMGTGLKGGTSFMEDYTYNFQPGNDLVVGSHMLEVCPSIAKEEKPLLDVQHLGIGGKADPARLIFSTPAGPALNASLIDMGNRFRLLVNVVDTVEQPHPLPKLPVARAIWQAQPSLATAAEAWIIAGGAHHTVFSQAVGVDELRLYAEMHGIEFLLIDNDTTLPAFKNEIRWNEVYYQLNR.

Mn(2+) contacts are provided by Glu-306, Glu-333, His-350, and His-450.

It belongs to the arabinose isomerase family. In terms of assembly, homohexamer. It depends on Mn(2+) as a cofactor.

The catalysed reaction is beta-L-arabinopyranose = L-ribulose. Its pathway is carbohydrate degradation; L-arabinose degradation via L-ribulose; D-xylulose 5-phosphate from L-arabinose (bacterial route): step 1/3. In terms of biological role, catalyzes the conversion of L-arabinose to L-ribulose. This is L-arabinose isomerase from Yersinia pseudotuberculosis serotype I (strain IP32953).